The following is a 158-amino-acid chain: NADPH-dependent 7-cyano-7-deazaguanine reductase (158 aa).

The active-site Thioimide intermediate is the Cys56. The Proton donor role is filled by Asp63. Substrate-binding positions include 78-80 (LES) and 97-98 (HE).

This sequence belongs to the GTP cyclohydrolase I family. QueF type 1 subfamily.

Its subcellular location is the cytoplasm. It carries out the reaction 7-aminomethyl-7-carbaguanine + 2 NADP(+) = 7-cyano-7-deazaguanine + 2 NADPH + 3 H(+). It participates in tRNA modification; tRNA-queuosine biosynthesis. Catalyzes the NADPH-dependent reduction of 7-cyano-7-deazaguanine (preQ0) to 7-aminomethyl-7-deazaguanine (preQ1). This Rhodopseudomonas palustris (strain TIE-1) protein is NADPH-dependent 7-cyano-7-deazaguanine reductase.